The chain runs to 92 residues: MRCSHNWDDPPPLFGAVSYGMQEGAGRGVRREARDTPCRGTAEGLATSQPEDGETRAALQRIDHLDTQLLQLERDLAHYLEMAELPDPFSEN.

Positions 25-53 are disordered; that stretch reads AGRGVRREARDTPCRGTAEGLATSQPEDG.

This is an uncharacterized protein from Treponema pallidum (strain Nichols).